A 351-amino-acid chain; its full sequence is Photosystem II D2 protein (351 aa).

The helical transmembrane segment at 39–59 threads the bilayer; the sequence is CAYLAVGGWLTGTTFVTSWYT. His116 lines the chlorophyll a pocket. Residues 123-139 traverse the membrane as a helical segment; sequence GFCLRQFEIARLVGLRP. Gln128 and Asn141 together coordinate pheophytin a. Residues 151-164 form a helical membrane-spanning segment; that stretch reads VFVSVFLMYPLGQA. Residue His196 coordinates chlorophyll a. Residues 206 to 226 traverse the membrane as a helical segment; the sequence is GALLCAIHGATVQNTLFEDGD. A plastoquinone-binding residues include His213 and Phe260. Position 213 (His213) interacts with Fe cation. Residue His267 participates in Fe cation binding. The chain crosses the membrane as a helical span at residues 277–293; sequence GLWTSAFGIVGLALNLR.

The protein belongs to the reaction center PufL/M/PsbA/D family. PSII is composed of 1 copy each of membrane proteins PsbA, PsbB, PsbC, PsbD, PsbE, PsbF, PsbH, PsbI, PsbJ, PsbK, PsbL, PsbM, PsbT, PsbX, PsbY, PsbZ, Psb30/Ycf12, at least 3 peripheral proteins of the oxygen-evolving complex and a large number of cofactors. It forms dimeric complexes. The D1/D2 heterodimer binds P680, chlorophylls that are the primary electron donor of PSII, and subsequent electron acceptors. It shares a non-heme iron and each subunit binds pheophytin, quinone, additional chlorophylls, carotenoids and lipids. There is also a Cl(-1) ion associated with D1 and D2, which is required for oxygen evolution. The PSII complex binds additional chlorophylls, carotenoids and specific lipids. serves as cofactor.

The protein resides in the plastid. Its subcellular location is the chloroplast thylakoid membrane. The catalysed reaction is 2 a plastoquinone + 4 hnu + 2 H2O = 2 a plastoquinol + O2. Its function is as follows. Photosystem II (PSII) is a light-driven water:plastoquinone oxidoreductase that uses light energy to abstract electrons from H(2)O, generating O(2) and a proton gradient subsequently used for ATP formation. It consists of a core antenna complex that captures photons, and an electron transfer chain that converts photonic excitation into a charge separation. The D1/D2 (PsbA/PsbD) reaction center heterodimer binds P680, the primary electron donor of PSII as well as several subsequent electron acceptors. D2 is needed for assembly of a stable PSII complex. The chain is Photosystem II D2 protein from Porphyra purpurea (Red seaweed).